A 349-amino-acid chain; its full sequence is Protein Wnt-7a (349 aa).

The N-terminal stretch at Met-1 to Ala-31 is a signal peptide. 5 disulfide bridges follow: Cys-73–Cys-84, Cys-123–Cys-131, Cys-133–Cys-152, Cys-200–Cys-214, and Cys-202–Cys-209. Asn-83 and Asn-127 each carry an N-linked (GlcNAc...) asparagine glycan. Ser-206 carries O-palmitoleoyl serine; by PORCN lipidation. Residues Val-238–Thr-266 are disordered linker. Cystine bridges form between Cys-278–Cys-309, Cys-294–Cys-304, Cys-308–Cys-348, Cys-324–Cys-339, Cys-326–Cys-336, and Cys-331–Cys-332. A glycan (N-linked (GlcNAc...) asparagine) is linked at Asn-295.

The protein belongs to the Wnt family. In terms of assembly, forms a soluble 1:1 complex with AFM; this prevents oligomerization and is required for prolonged biological activity. The complex with AFM may represent the physiological form in body fluids. Interacts with PORCN. Interacts (via intrinsically disordered linker region) with RECK; interaction with RECK confers ligand selectivity for Wnt7 in brain endothelial cells and allows these cells to selectively respond to Wnt7. Interacts with FZD5. In terms of processing, palmitoleoylation is required for efficient binding to frizzled receptors. Depalmitoleoylation leads to Wnt signaling pathway inhibition.

It is found in the secreted. Its subcellular location is the extracellular space. It localises to the extracellular matrix. In terms of biological role, ligand for members of the frizzled family of seven transmembrane receptors that functions in the canonical Wnt/beta-catenin signaling pathway. Plays an important role in embryonic development, including dorsal versus ventral patterning during limb development, skeleton development and urogenital tract development. Required for central nervous system (CNS) angiogenesis and blood-brain barrier regulation. Required for normal, sexually dimorphic development of the Mullerian ducts, and for normal fertility in both sexes. Required for normal neural stem cell proliferation in the hippocampus dentate gyrus. Required for normal progress through the cell cycle in neural progenitor cells, for self-renewal of neural stem cells, and for normal neuronal differentiation and maturation. Promotes formation of synapses via its interaction with FZD5. This chain is Protein Wnt-7a (WNT7A), found in Chlorocebus aethiops (Green monkey).